Here is a 71-residue protein sequence, read N- to C-terminus: Conotoxin Lt11.3 (71 aa).

Residues 1–26 form the signal peptide; sequence MMFRLTSVGCILLVIAFLNLVGLTNA. Cystine bridges form between Cys-27-Cys-41, Cys-34-Cys-46, Cys-40-Cys-50, and Cys-45-Cys-54. Pro-57 bears the Proline amide mark. The propeptide occupies 61–71; the sequence is TRLQGFFKHRR.

Belongs to the conotoxin I2 superfamily. Expressed by the venom duct.

It localises to the secreted. Functionally, probable neurotoxin. The chain is Conotoxin Lt11.3 from Conus litteratus (Lettered cone).